Consider the following 262-residue polypeptide: Glucosamine-6-phosphate deaminase (262 aa).

Asp63 (proton acceptor; for enolization step) is an active-site residue. Residue Asn129 is the For ring-opening step of the active site. His131 acts as the Proton acceptor; for ring-opening step in catalysis. The For ring-opening step role is filled by Glu136.

The protein belongs to the glucosamine/galactosamine-6-phosphate isomerase family. NagB subfamily.

It carries out the reaction alpha-D-glucosamine 6-phosphate + H2O = beta-D-fructose 6-phosphate + NH4(+). It participates in amino-sugar metabolism; N-acetylneuraminate degradation; D-fructose 6-phosphate from N-acetylneuraminate: step 5/5. Catalyzes the reversible isomerization-deamination of glucosamine 6-phosphate (GlcN6P) to form fructose 6-phosphate (Fru6P) and ammonium ion. In Bacillus cytotoxicus (strain DSM 22905 / CIP 110041 / 391-98 / NVH 391-98), this protein is Glucosamine-6-phosphate deaminase.